The primary structure comprises 90 residues: Barstar (90 aa).

Belongs to the barstar family.

It localises to the cytoplasm. Inhibitor of the ribonuclease barnase. Forms a one-to-one non-covalent complex. The sequence is that of Barstar from Bacillus amyloliquefaciens (Bacillus velezensis).